A 332-amino-acid polypeptide reads, in one-letter code: Protein pelota homolog (332 aa).

This sequence belongs to the eukaryotic release factor 1 family. Pelota subfamily. In terms of assembly, monomer. A divalent metal cation serves as cofactor.

It localises to the cytoplasm. In terms of biological role, may function in recognizing stalled ribosomes, interact with stem-loop structures in stalled mRNA molecules, and effect endonucleolytic cleavage of the mRNA. May play a role in the release non-functional ribosomes and degradation of damaged mRNAs. Has endoribonuclease activity. This is Protein pelota homolog from Pyrobaculum aerophilum (strain ATCC 51768 / DSM 7523 / JCM 9630 / CIP 104966 / NBRC 100827 / IM2).